The sequence spans 130 residues: MAENQYYGTGRRKSSAARVFIKPGNGKIVINQRSLEQYFGRETARMVVRQPLELVDMVEKLDLYITVKGGGISGQAGAIRHGITRALMEYDESLRGELRKAGFVTRDARQVERKKVGLRKARRRPQFSKR.

It belongs to the universal ribosomal protein uS9 family.

This is Small ribosomal subunit protein uS9 from Salmonella paratyphi A (strain AKU_12601).